Reading from the N-terminus, the 394-residue chain is HORMA domain-containing protein 1 (394 aa).

The region spanning 24–226 (QQSLVLVKRL…TPFHTFKVKV (203 aa)) is the HORMA domain. The interval 306 to 394 (KESPELSISH…RKFSEPKEHI (89 aa)) is disordered. Residues 311 to 325 (LSISHSQVEQLVSKT) are compositionally biased toward polar residues. The segment covering 353–362 (KSKESRKRSQ) has biased composition (basic and acidic residues). The residue at position 376 (S376) is a Phosphoserine. The Nuclear localization signal motif lies at 383–386 (KRRK).

Interacts with HORMAD2. Interacts with IHO1. Post-translationally, phosphorylated at Ser-377 in a SPO11-dependent manner.

It is found in the nucleus. It localises to the chromosome. Plays a key role in meiotic progression. Regulates 3 different functions during meiosis: ensures that sufficient numbers of processed DNA double-strand breaks (DSBs) are available for successful homology search by increasing the steady-state numbers of single-stranded DSB ends. Promotes synaptonemal-complex formation independently of its role in homology search. Plays a key role in the male mid-pachytene checkpoint and the female meiotic prophase checkpoint: required for efficient build-up of ATR activity on unsynapsed chromosome regions, a process believed to form the basis of meiotic silencing of unsynapsed chromatin (MSUC) and meiotic prophase quality control in both sexes. The sequence is that of HORMA domain-containing protein 1 (HORMAD1) from Sus scrofa (Pig).